A 291-amino-acid polypeptide reads, in one-letter code: Protein-export membrane protein SecF (291 aa).

A run of 6 helical transmembrane segments spans residues Leu19–Val39, Leu134–Phe154, Val156–Ala176, Leu187–Asn209, Met226–Val246, and Ala256–Leu278.

The protein belongs to the SecD/SecF family. SecF subfamily. In terms of assembly, part of the protein translocation apparatus. Forms a complex with SecD.

Its subcellular location is the cell membrane. Its function is as follows. Involved in protein export. In Haloquadratum walsbyi (strain DSM 16790 / HBSQ001), this protein is Protein-export membrane protein SecF.